We begin with the raw amino-acid sequence, 156 residues long: ATP synthase subunit b (156 aa).

Residues 7 to 29 (LIGQLIAFALFTWFCVKFVWPPI) traverse the membrane as a helical segment.

Belongs to the ATPase B chain family. As to quaternary structure, F-type ATPases have 2 components, F(1) - the catalytic core - and F(0) - the membrane proton channel. F(1) has five subunits: alpha(3), beta(3), gamma(1), delta(1), epsilon(1). F(0) has three main subunits: a(1), b(2) and c(10-14). The alpha and beta chains form an alternating ring which encloses part of the gamma chain. F(1) is attached to F(0) by a central stalk formed by the gamma and epsilon chains, while a peripheral stalk is formed by the delta and b chains.

Its subcellular location is the cell inner membrane. Functionally, f(1)F(0) ATP synthase produces ATP from ADP in the presence of a proton or sodium gradient. F-type ATPases consist of two structural domains, F(1) containing the extramembraneous catalytic core and F(0) containing the membrane proton channel, linked together by a central stalk and a peripheral stalk. During catalysis, ATP synthesis in the catalytic domain of F(1) is coupled via a rotary mechanism of the central stalk subunits to proton translocation. Its function is as follows. Component of the F(0) channel, it forms part of the peripheral stalk, linking F(1) to F(0). In Mannheimia succiniciproducens (strain KCTC 0769BP / MBEL55E), this protein is ATP synthase subunit b.